We begin with the raw amino-acid sequence, 435 residues long: Tol-Pal system protein TolB (435 aa).

Positions 1–20 (MRKIIAGVFIFVFLISNLYA) are cleaved as a signal peptide.

Belongs to the TolB family. In terms of assembly, the Tol-Pal system is composed of five core proteins: the inner membrane proteins TolA, TolQ and TolR, the periplasmic protein TolB and the outer membrane protein Pal. They form a network linking the inner and outer membranes and the peptidoglycan layer.

The protein resides in the periplasm. Functionally, part of the Tol-Pal system, which plays a role in outer membrane invagination during cell division and is important for maintaining outer membrane integrity. In Francisella tularensis subsp. holarctica (strain LVS), this protein is Tol-Pal system protein TolB.